We begin with the raw amino-acid sequence, 561 residues long: MNINVADLLNGNYILLLFVVLALGLCLGKLRLGSVQLGNSIGVLVVSLLLGQQHFAINTDALNLGFMLFIFCVGVEAGPNFFSIFFRDGKNYLMLALVMVGSAMLIAMVLGKVFGWDIGLTAGMLAGAMTSTPVLVGAGDTLRHFGLPSDQLAQSLDHLSLGYALTYLVGLVSLIVGARYMPKLQHQDLQTSAQQIARERGLDTDSKRKVYLPVIRAYRVGPELVAWADGKNLRELGIYRQTGCYIERIRRNGILANPDGDAVLQMGDDIALVGYPDAHARLDPSFRNGKEVFDRDLLDMRIVTEEIVVKNHNAVGRRLAQLKLTDHGCFLNRVIRSQIEMPIDDNVVLNKGDVLQVSGDARRVKTVADRIGFISIHSQVTDLLAFCAFFIVGLMIGMITFQFSSFSFGIGNAAGLLFAGIMLGFLRANHPTFGYIPQGALNMVKEFGLMVFMAGVGLSAGAGINNGLGAVGGQMLAAGLIVSLVPVVICFLFGAYVLRMNRAMLFGAMMGARTCAPAMEIISDTARSNIPALGYAGTYAIANVLLTLAGTLIVIIWPGLQ.

The next 5 helical transmembrane spans lie at 8 to 28 (LLNGNYILLLFVVLALGLCLG), 37 to 57 (LGNSIGVLVVSLLLGQQHFAI), 66 to 86 (FMLFIFCVGVEAGPNFFSIFF), 94 to 114 (MLALVMVGSAMLIAMVLGKVF), and 158 to 178 (HLSLGYALTYLVGLVSLIVGA). 2 RCK C-terminal domains span residues 202–288 (LDTD…SFRN) and 292–373 (VFDR…RIGF). 5 helical membrane-spanning segments follow: residues 383-403 (LLAFCAFFIVGLMIGMITFQF), 406-426 (FSFGIGNAAGLLFAGIMLGFL), 447-467 (FGLMVFMAGVGLSAGAGINNG), 478-498 (AGLIVSLVPVVICFLFGAYVL), and 540-560 (AIANVLLTLAGTLIVIIWPGL).

It belongs to the AAE transporter (TC 2.A.81) family. YbjL subfamily.

The protein localises to the cell membrane. The sequence is that of Putative transport protein KPN78578_08530 from Klebsiella pneumoniae subsp. pneumoniae (strain ATCC 700721 / MGH 78578).